The chain runs to 889 residues: Coatomer subunit gamma-2 (889 aa).

HEAT repeat units follow at residues 67–102, 103–140, 289–326, 328–360, and 361–398; these read VEAT…SPSA, DEVI…STLL, RELT…THPL, VTNC…TGNE, and SSVD…KFPL. The disordered stretch occupies residues 596-617; the sequence is PLAEKKTTGKKPTGPASALSGP.

This sequence belongs to the COPG family. Oligomeric complex that consists of at least the alpha, beta, beta', gamma, delta, epsilon and zeta subunits.

The protein resides in the cytoplasm. It localises to the golgi apparatus membrane. The protein localises to the cytoplasmic vesicle. It is found in the COPI-coated vesicle membrane. Functionally, the coatomer is a cytosolic protein complex that binds to dilysine motifs and reversibly associates with Golgi non-clathrin-coated vesicles, which further mediate biosynthetic protein transport from the ER, via the Golgi up to the trans Golgi network. Coatomer complex is required for budding from Golgi membranes, and is essential for the retrograde Golgi-to-ER transport of dilysine-tagged proteins. This is Coatomer subunit gamma-2 from Oryza sativa subsp. japonica (Rice).